The following is a 426-amino-acid chain: 5-methylthioadenosine/S-adenosylhomocysteine deaminase (426 aa).

Residues His60 and His62 each contribute to the Zn(2+) site. Substrate is bound by residues Glu89 and His179. Zn(2+) is bound at residue His206. The substrate site is built by Glu209 and Asp294. Asp294 is a Zn(2+) binding site.

This sequence belongs to the metallo-dependent hydrolases superfamily. MTA/SAH deaminase family. The cofactor is Zn(2+).

It catalyses the reaction S-adenosyl-L-homocysteine + H2O + H(+) = S-inosyl-L-homocysteine + NH4(+). It carries out the reaction S-methyl-5'-thioadenosine + H2O + H(+) = S-methyl-5'-thioinosine + NH4(+). Functionally, catalyzes the deamination of 5-methylthioadenosine and S-adenosyl-L-homocysteine into 5-methylthioinosine and S-inosyl-L-homocysteine, respectively. Is also able to deaminate adenosine. The polypeptide is 5-methylthioadenosine/S-adenosylhomocysteine deaminase (Dictyoglomus turgidum (strain DSM 6724 / Z-1310)).